A 580-amino-acid chain; its full sequence is Threonine--tRNA ligase (580 aa).

The segment at 179 to 476 (DHRKIGKDLN…LLEQTKGILP (298 aa)) is catalytic. Zn(2+) contacts are provided by Cys-272, His-323, and His-453.

Belongs to the class-II aminoacyl-tRNA synthetase family. Homodimer. Zn(2+) serves as cofactor.

It localises to the cytoplasm. The enzyme catalyses tRNA(Thr) + L-threonine + ATP = L-threonyl-tRNA(Thr) + AMP + diphosphate + H(+). Its function is as follows. Catalyzes the attachment of threonine to tRNA(Thr) in a two-step reaction: L-threonine is first activated by ATP to form Thr-AMP and then transferred to the acceptor end of tRNA(Thr). Also edits incorrectly charged L-seryl-tRNA(Thr). This chain is Threonine--tRNA ligase, found in Ureaplasma parvum serovar 3 (strain ATCC 27815 / 27 / NCTC 11736).